Here is a 304-residue protein sequence, read N- to C-terminus: Oxygen-dependent coproporphyrinogen-III oxidase (304 aa).

Ser-95 serves as a coordination point for substrate. The a divalent metal cation site is built by His-99 and His-109. His-109 (proton donor) is an active-site residue. Asn-111–Arg-113 contributes to the substrate binding site. His-148 and His-178 together coordinate a divalent metal cation. The tract at residues Tyr-243–Arg-278 is important for dimerization. Gly-261–Arg-263 is a substrate binding site.

It belongs to the aerobic coproporphyrinogen-III oxidase family. As to quaternary structure, homodimer. Requires a divalent metal cation as cofactor.

Its subcellular location is the cytoplasm. The catalysed reaction is coproporphyrinogen III + O2 + 2 H(+) = protoporphyrinogen IX + 2 CO2 + 2 H2O. It participates in porphyrin-containing compound metabolism; protoporphyrin-IX biosynthesis; protoporphyrinogen-IX from coproporphyrinogen-III (O2 route): step 1/1. In terms of biological role, involved in the heme biosynthesis. Catalyzes the aerobic oxidative decarboxylation of propionate groups of rings A and B of coproporphyrinogen-III to yield the vinyl groups in protoporphyrinogen-IX. The sequence is that of Oxygen-dependent coproporphyrinogen-III oxidase from Thioalkalivibrio sulfidiphilus (strain HL-EbGR7).